A 450-amino-acid polypeptide reads, in one-letter code: Malate:quinone oxidoreductase (450 aa).

This sequence belongs to the MQO family. FAD serves as cofactor.

It localises to the cell membrane. The enzyme catalyses (S)-malate + a quinone = a quinol + oxaloacetate. It participates in carbohydrate metabolism; tricarboxylic acid cycle; oxaloacetate from (S)-malate (quinone route): step 1/1. In terms of biological role, catalyzes oxidation of malate to oxaloacetate in the citric acid cycle. Donates electrons to quinones of the electron transfer chain. This is Malate:quinone oxidoreductase (mqo) from Helicobacter pylori (strain J99 / ATCC 700824) (Campylobacter pylori J99).